We begin with the raw amino-acid sequence, 453 residues long: MMESAVDSERTMLKREIADLRAALNQKEQCLRELEDSVSFATRSEQEVVGNDLESPGGAVHTKLTNDDIARYSRQLILPDFGVQGQLKLKNSSVLIVGMGGLGCPAAQYLAAAGCGHLGLVDYDEVERSNFHRQILHSEDRCGMSKAESARIALNELNPHCEIHCHSRMLYPHNAMHIIRGYDVVLDCTDNVPTRYLLSDACVMLNKPLVSGSALKMDGQLTVYNYGNGPCYRCIFPVPPPPEAVTNCGDGGVLGAVTGTIGAMQALEAIKVIVGMGDVLAGRLLIFDGSSCVFRNIRIRSKRPNCHMCSAQPLITELINYEMFCGMHATDKNNPTLLFSTDERLSVEEYHRKIQAKPHLLIDVRPTAEFEICQLPEAVNVPLVEILDDSYLKRLGKQLEDKELPVVLLCRRGNDSQIAVQHLRNRFPKHFVRDLIGGLHAWTSNIDPNFPIY.

Thr62 bears the Phosphothreonine mark. ATP-binding positions include Gly101, Asp122, 129-133, Lys146, and 190-191; these read SNFHR and DN. Zn(2+) contacts are provided by Cys231 and Cys234. Catalysis depends on Cys248, which acts as the Glycyl thioester intermediate; for adenylyltransferase activity. Residues Cys306 and Cys309 each contribute to the Zn(2+) site. In terms of domain architecture, Rhodanese spans 355–451; sequence QAKPHLLIDV…WTSNIDPNFP (97 aa). The active-site Cysteine persulfide intermediate; for sulfurtransferase activity is Cys410.

This sequence in the N-terminal section; belongs to the HesA/MoeB/ThiF family. UBA4 subfamily. Zn(2+) serves as cofactor.

It is found in the cytoplasm. The protein resides in the cytosol. The enzyme catalyses [molybdopterin-synthase sulfur-carrier protein]-C-terminal Gly-Gly + ATP + H(+) = [molybdopterin-synthase sulfur-carrier protein]-C-terminal Gly-Gly-AMP + diphosphate. The catalysed reaction is [molybdopterin-synthase sulfur-carrier protein]-C-terminal Gly-Gly-AMP + S-sulfanyl-L-cysteinyl-[cysteine desulfurase] + AH2 = [molybdopterin-synthase sulfur-carrier protein]-C-terminal-Gly-aminoethanethioate + L-cysteinyl-[cysteine desulfurase] + A + AMP + 2 H(+). It participates in tRNA modification; 5-methoxycarbonylmethyl-2-thiouridine-tRNA biosynthesis. It functions in the pathway cofactor biosynthesis; molybdopterin biosynthesis. Functionally, plays a central role in 2-thiolation of mcm(5)S(2)U at tRNA wobble positions of cytosolic tRNA(Lys), tRNA(Glu) and tRNA(Gln). Also essential during biosynthesis of the molybdenum cofactor. Acts by mediating the C-terminal thiocarboxylation of sulfur carriers URM1 and MOCS2A. Its N-terminus first activates URM1 and MOCS2A as acyl-adenylates (-COAMP), then the persulfide sulfur on the catalytic cysteine is transferred to URM1 and MOCS2A to form thiocarboxylation (-COSH) of their C-terminus. The reaction probably involves hydrogen sulfide that is generated from the persulfide intermediate and that acts as a nucleophile towards URM1 and MOCS2A. Subsequently, a transient disulfide bond is formed. Does not use thiosulfate as sulfur donor; NFS1 probably acting as a sulfur donor for thiocarboxylation reactions. This chain is Adenylyltransferase and sulfurtransferase MOCS3, found in Drosophila sechellia (Fruit fly).